The sequence spans 404 residues: Phosphopentomutase (404 aa).

Positions 10, 303, 308, 344, 345, and 356 each coordinate Mn(2+).

This sequence belongs to the phosphopentomutase family. Requires Mn(2+) as cofactor.

The protein resides in the cytoplasm. It catalyses the reaction 2-deoxy-alpha-D-ribose 1-phosphate = 2-deoxy-D-ribose 5-phosphate. The catalysed reaction is alpha-D-ribose 1-phosphate = D-ribose 5-phosphate. It participates in carbohydrate degradation; 2-deoxy-D-ribose 1-phosphate degradation; D-glyceraldehyde 3-phosphate and acetaldehyde from 2-deoxy-alpha-D-ribose 1-phosphate: step 1/2. Functionally, isomerase that catalyzes the conversion of deoxy-ribose 1-phosphate (dRib-1-P) and ribose 1-phosphate (Rib-1-P) to deoxy-ribose 5-phosphate (dRib-5-P) and ribose 5-phosphate (Rib-5-P), respectively. This chain is Phosphopentomutase, found in Shewanella sp. (strain MR-4).